The chain runs to 380 residues: Probable protein phosphatase 2C 27 (380 aa).

The PPM-type phosphatase domain occupies 84 to 344 (RSGSCAEQGA…DNLTVIVVCF (261 aa)). Residues aspartate 128, glycine 129, aspartate 292, and aspartate 335 each coordinate Mn(2+).

It belongs to the PP2C family. The cofactor is Mg(2+). It depends on Mn(2+) as a cofactor. As to expression, expressed in roots, leaves, stems, flower, and trichomes.

The protein resides in the nucleus. Its subcellular location is the cytoplasm. It catalyses the reaction O-phospho-L-seryl-[protein] + H2O = L-seryl-[protein] + phosphate. The catalysed reaction is O-phospho-L-threonyl-[protein] + H2O = L-threonyl-[protein] + phosphate. In terms of biological role, confers salt tolerance by triggering the expression of stress-responsive genes. The polypeptide is Probable protein phosphatase 2C 27 (Arabidopsis thaliana (Mouse-ear cress)).